The following is a 131-amino-acid chain: Small ribosomal subunit protein uS8 (131 aa).

The protein belongs to the universal ribosomal protein uS8 family. Part of the 30S ribosomal subunit. Contacts proteins S5 and S12.

One of the primary rRNA binding proteins, it binds directly to 16S rRNA central domain where it helps coordinate assembly of the platform of the 30S subunit. The sequence is that of Small ribosomal subunit protein uS8 from Hyphomonas neptunium (strain ATCC 15444).